Consider the following 181-residue polypeptide: Oligoribonuclease (181 aa).

Positions 8-171 (LIWIDLEMTG…DDIRESVAEL (164 aa)) constitute an Exonuclease domain. Residue tyrosine 129 is part of the active site.

The protein belongs to the oligoribonuclease family.

It is found in the cytoplasm. Functionally, 3'-to-5' exoribonuclease specific for small oligoribonucleotides. This chain is Oligoribonuclease, found in Shigella flexneri.